The primary structure comprises 32 residues: Photosystem I reaction center subunit XII (32 aa).

A helical transmembrane segment spans residues 10–27 (VVALVSAFVTGILALRLG).

This sequence belongs to the PsaM family.

Its subcellular location is the plastid. The protein localises to the chloroplast thylakoid membrane. The protein is Photosystem I reaction center subunit XII of Staurastrum punctulatum (Green alga).